The following is a 461-amino-acid chain: Mannose-6-phosphate isomerase (461 aa).

Residues Gln107, His109, Glu134, and His291 each coordinate Zn(2+). The active site involves Arg310.

Belongs to the mannose-6-phosphate isomerase type 1 family. Requires Zn(2+) as cofactor.

It localises to the cytoplasm. It catalyses the reaction D-mannose 6-phosphate = D-fructose 6-phosphate. Its pathway is nucleotide-sugar biosynthesis; GDP-alpha-D-mannose biosynthesis; alpha-D-mannose 1-phosphate from D-fructose 6-phosphate: step 1/2. Functionally, involved in the synthesis of the GDP-mannose and dolichol-phosphate-mannose required for a number of critical mannosyl transfer reactions. The polypeptide is Mannose-6-phosphate isomerase (manA) (Emericella nidulans (strain FGSC A4 / ATCC 38163 / CBS 112.46 / NRRL 194 / M139) (Aspergillus nidulans)).